Here is a 499-residue protein sequence, read N- to C-terminus: Lysosomal Pro-X carboxypeptidase (499 aa).

A signal peptide spans 1 to 21 (MGRCSLLLLLLLIAFLTPGAA). Residues 22 to 47 (NPVSPSLRAPSSLPWSTSFRSRPTIT) constitute a propeptide that is removed on maturation. Residue N103 is glycosylated (N-linked (GlcNAc...) asparagine). Catalysis depends on S181, which acts as the Charge relay system. The interval 196–337 (HLVVGALASS…QNIFQALNVY (142 aa)) is SKS domain. 4 disulfides stabilise this stretch: C217-C375, C235-C313, C266-C346, and C367-C397. N-linked (GlcNAc...) asparagine glycosylation occurs at N234. N-linked (GlcNAc...) asparagine glycosylation is found at N339 and N348. The N-linked (GlcNAc...) asparagine glycan is linked to N418. Residues D433 and H458 each act as charge relay system in the active site.

It belongs to the peptidase S28 family. As to quaternary structure, homodimer.

The protein localises to the lysosome. The enzyme catalyses Cleavage of a -Pro-|-Xaa bond to release a C-terminal amino acid.. In terms of biological role, cleaves C-terminal amino acids linked to proline in peptides such as angiotensin II, III and des-Arg9-bradykinin. This cleavage occurs at acidic pH, but enzymatic activity is retained with some substrates at neutral pH. In Bos taurus (Bovine), this protein is Lysosomal Pro-X carboxypeptidase (PRCP).